The sequence spans 642 residues: Threonine--tRNA ligase (642 aa).

The region spanning 1–61 is the TGS domain; that stretch reads MPVITLPDGS…ENDATLSIIT (61 aa). The segment at 243-534 is catalytic; it reads DHRKIGKQLD…LTEEFAGFFP (292 aa). 3 residues coordinate Zn(2+): cysteine 334, histidine 385, and histidine 511.

This sequence belongs to the class-II aminoacyl-tRNA synthetase family. Homodimer. Requires Zn(2+) as cofactor.

Its subcellular location is the cytoplasm. It catalyses the reaction tRNA(Thr) + L-threonine + ATP = L-threonyl-tRNA(Thr) + AMP + diphosphate + H(+). Catalyzes the attachment of threonine to tRNA(Thr) in a two-step reaction: L-threonine is first activated by ATP to form Thr-AMP and then transferred to the acceptor end of tRNA(Thr). Also edits incorrectly charged L-seryl-tRNA(Thr). This Salmonella paratyphi A (strain ATCC 9150 / SARB42) protein is Threonine--tRNA ligase.